The chain runs to 358 residues: NADH-quinone oxidoreductase subunit H (358 aa).

8 consecutive transmembrane segments (helical) span residues 30–50 (IVIG…MIFM), 96–116 (FLYN…FSCL), 129–149 (VGIF…LLAG), 165–185 (GAQM…IVIL), 201–221 (GWFL…YLIA), 264–284 (LFII…PLHI), 297–317 (IPGF…LMWI), and 336–356 (YLVP…VFKL).

It belongs to the complex I subunit 1 family. As to quaternary structure, NDH-1 is composed of 14 different subunits. Subunits NuoA, H, J, K, L, M, N constitute the membrane sector of the complex.

The protein localises to the cell inner membrane. It catalyses the reaction a quinone + NADH + 5 H(+)(in) = a quinol + NAD(+) + 4 H(+)(out). In terms of biological role, NDH-1 shuttles electrons from NADH, via FMN and iron-sulfur (Fe-S) centers, to quinones in the respiratory chain. The immediate electron acceptor for the enzyme in this species is believed to be ubiquinone. Couples the redox reaction to proton translocation (for every two electrons transferred, four hydrogen ions are translocated across the cytoplasmic membrane), and thus conserves the redox energy in a proton gradient. This subunit may bind ubiquinone. The polypeptide is NADH-quinone oxidoreductase subunit H (Phocaeicola vulgatus (strain ATCC 8482 / DSM 1447 / JCM 5826 / CCUG 4940 / NBRC 14291 / NCTC 11154) (Bacteroides vulgatus)).